The following is a 299-amino-acid chain: Exosome complex component rrp42 (299 aa).

The protein belongs to the RNase PH family. Component of the RNA exosome complex. Specifically part of the catalytically inactive RNA exosome core complex (Exo-9) which may associate with the catalytic subunits rrp6 and dis3 in cytoplasmic- and nuclear-specific RNA exosome complex forms. Exo-9 is formed by a hexameric base ring of RNase PH domain-containing subunits and a cap ring consisting of csl4, rrp4 and rrp40.

The protein localises to the cytoplasm. It is found in the nucleus. It localises to the nucleolus. Functionally, non-catalytic component of the RNA exosome complex which has 3'-&gt;5' exoribonuclease activity and participates in a multitude of cellular RNA processing and degradation events. In the nucleus, the RNA exosome complex is involved in proper maturation of stable RNA species such as rRNA, snRNA and snoRNA, in the elimination of RNA processing by-products and non-coding 'pervasive' transcripts, such as antisense RNA species and cryptic unstable transcripts (CUTs), and of mRNAs with processing defects, thereby limiting or excluding their export to the cytoplasm. In the cytoplasm, the RNA exosome complex is involved in general mRNA turnover and in RNA surveillance pathways, preventing translation of aberrant mRNAs. The catalytic inactive RNA exosome core complex of 9 subunits (Exo-9) is proposed to play a pivotal role in the binding and presentation of RNA for ribonucleolysis, and to serve as a scaffold for the association with catalytic subunits and accessory proteins or complexes. ski6 is part of the hexameric ring of RNase PH domain-containing subunits proposed to form a central channel which threads RNA substrates for degradation. The polypeptide is Exosome complex component rrp42 (rrp42) (Schizosaccharomyces pombe (strain 972 / ATCC 24843) (Fission yeast)).